We begin with the raw amino-acid sequence, 79 residues long: UPF0291 protein SAV1341 (79 aa).

A disordered region spans residues 56 to 79; it reads IDPEGNDVTPEKIKEIQQKRDNKN. The span at 64–79 shows a compositional bias: basic and acidic residues; sequence TPEKIKEIQQKRDNKN.

Belongs to the UPF0291 family.

Its subcellular location is the cytoplasm. In Staphylococcus aureus (strain Mu50 / ATCC 700699), this protein is UPF0291 protein SAV1341.